Here is a 663-residue protein sequence, read N- to C-terminus: MAU2 chromatid cohesion factor homolog (663 aa).

TPR repeat units follow at residues 455-488 (GGFYYVQGLHAFHKNSFHEAKRFLRETLKMANAE) and 495-528 (SCSLVLLSHVFLSIGNSKESMNMVTPAMQLASKI).

The protein belongs to the SCC4/mau-2 family. Interacts with Nipped-B to form the cohesin loading complex.

It is found in the nucleus. Its subcellular location is the nucleoplasm. In terms of biological role, required for association of the cohesin complex with chromatin during interphase. Plays a role in sister chromatid cohesion and normal progression through prometaphase. This is MAU2 chromatid cohesion factor homolog from Drosophila willistoni (Fruit fly).